Here is a 299-residue protein sequence, read N- to C-terminus: GTPase Era (299 aa).

Positions 5–175 constitute an Era-type G domain; the sequence is RSGFVCLVGR…IDVLAAALPP (171 aa). The segment at 13 to 20 is G1; that stretch reads GRPNTGKS. 13–20 lines the GTP pocket; it reads GRPNTGKS. The G2 stretch occupies residues 39 to 43; the sequence is QTTRH. Residues 60 to 63 are G3; it reads DTPG. GTP contacts are provided by residues 60 to 64 and 124 to 127; these read DTPGL and TKID. The interval 124–127 is G4; the sequence is TKID. Positions 154–156 are G5; the sequence is VSA. Positions 206–285 constitute a KH type-2 domain; sequence VRDELPHSLA…YLDLRVKVAK (80 aa).

The protein belongs to the TRAFAC class TrmE-Era-EngA-EngB-Septin-like GTPase superfamily. Era GTPase family. As to quaternary structure, monomer.

It is found in the cell envelope. The protein resides in the secreted. Its subcellular location is the cell wall. Functionally, exhibits GTPase activity. Binds RNA but is probably not involved in ribosome assembly in mycobacteria. The protein is GTPase Era of Mycolicibacterium paratuberculosis (strain ATCC BAA-968 / K-10) (Mycobacterium paratuberculosis).